Here is a 256-residue protein sequence, read N- to C-terminus: Galactitol 2-dehydrogenase (256 aa).

NAD(+)-binding positions include 15 to 17 (RGI), Asp-36, 59 to 60 (DV), Asn-86, Tyr-152, and Lys-156. Tyr-152 acts as the Proton acceptor in catalysis.

It belongs to the short-chain dehydrogenases/reductases (SDR) family.

It catalyses the reaction galactitol + NAD(+) = keto-D-tagatose + NADH + H(+). The enzyme catalyses keto-D-fructose + NADH + H(+) = D-sorbitol + NAD(+). It functions in the pathway carbohydrate metabolism. Involved in galactitol catabolism. Catalyzes the oxidation of galactitol to D-tagatose. Can also catalyze the oxidation of D-sorbitol to D-fructose. The chain is Galactitol 2-dehydrogenase from Agrobacterium fabrum (strain C58 / ATCC 33970) (Agrobacterium tumefaciens (strain C58)).